The chain runs to 449 residues: Mycosin-1 (449 aa).

The N-terminal stretch at 1-23 (MQRVAVMVLAVLLALFSAPPAWA) is a signal peptide. The cysteines at positions 51 and 120 are disulfide-linked. Residues 66–389 (PWANDYLRIQ…AGVIDPVAAL (324 aa)) enclose the Peptidase S8 domain. Active-site charge relay system residues include D92 and H123. Disordered regions lie at residues 160-179 (FQPKGARQDPNDPNTTQTAG) and 240-259 (TGQDCSQNPPPDPSVPSDPR). Polar residues predominate over residues 170 to 179 (NDPNTTQTAG). A disulfide bridge connects residues C206 and C244. S334 acts as the Charge relay system in catalysis. The helical transmembrane segment at 421–441 (ITAVVIAGATLAFALGIGALA) threads the bilayer.

Belongs to the peptidase S8 family.

It localises to the cell membrane. In terms of biological role, may play a dual role in regulation of ESX-1 secretion and virulence. Acts as a protease that cleaves EspB. This chain is Mycosin-1, found in Mycolicibacterium smegmatis (strain ATCC 700084 / mc(2)155) (Mycobacterium smegmatis).